Here is a 231-residue protein sequence, read N- to C-terminus: Uracil-DNA glycosylase (231 aa).

Asp-74 (proton acceptor) is an active-site residue.

Belongs to the uracil-DNA glycosylase (UDG) superfamily. UNG family.

The protein resides in the cytoplasm. The catalysed reaction is Hydrolyzes single-stranded DNA or mismatched double-stranded DNA and polynucleotides, releasing free uracil.. Its function is as follows. Excises uracil residues from the DNA which can arise as a result of misincorporation of dUMP residues by DNA polymerase or due to deamination of cytosine. The polypeptide is Uracil-DNA glycosylase (Campylobacter jejuni subsp. jejuni serotype O:23/36 (strain 81-176)).